Here is a 248-residue protein sequence, read N- to C-terminus: Proteasome subunit alpha type-7 (248 aa).

A glycan (O-linked (GlcNAc) serine) is linked at Ser130. Tyr153 is subject to Phosphotyrosine; by ABL1 and ABL2. Lys227 is subject to N6-acetyllysine.

It belongs to the peptidase T1A family. In terms of assembly, the 26S proteasome consists of a 20S proteasome core and two 19S regulatory subunits. The 20S proteasome core is a barrel-shaped complex made of 28 subunits that are arranged in four stacked rings. The two outer rings are each formed by seven alpha subunits, and the two inner rings are formed by seven beta subunits. The proteolytic activity is exerted by three beta-subunits PSMB5, PSMB6 and PSMB7. PSMA7 interacts directly with the PSMG1-PSMG2 heterodimer which promotes 20S proteasome assembly. Interacts with HIF1A. Interacts with RAB7A. Interacts with PRKN. Interacts with ABL1 and ABL2. Interacts with EMAP2. Interacts with MAVS. Post-translationally, phosphorylation by ABL1 or ABL2 leads to an inhibition of proteasomal activity and cell cycle transition blocks. In terms of tissue distribution, detected in liver (at protein level).

Its subcellular location is the cytoplasm. It localises to the nucleus. In terms of biological role, component of the 20S core proteasome complex involved in the proteolytic degradation of most intracellular proteins. This complex plays numerous essential roles within the cell by associating with different regulatory particles. Associated with two 19S regulatory particles, forms the 26S proteasome and thus participates in the ATP-dependent degradation of ubiquitinated proteins. The 26S proteasome plays a key role in the maintenance of protein homeostasis by removing misfolded or damaged proteins that could impair cellular functions, and by removing proteins whose functions are no longer required. Associated with the PA200 or PA28, the 20S proteasome mediates ubiquitin-independent protein degradation. This type of proteolysis is required in several pathways including spermatogenesis (20S-PA200 complex) or generation of a subset of MHC class I-presented antigenic peptides (20S-PA28 complex). This is Proteasome subunit alpha type-7 (Psma7) from Mus musculus (Mouse).